The primary structure comprises 1095 residues: Solute carrier family 12 member 1 (1095 aa).

The Cytoplasmic portion of the chain corresponds to 1–173 (MSVSIPSNSV…EEDMTGVVKF (173 aa)). Positions 16–19 (RFQV) match the RFXV motif motif. Positions 29 to 49 (AAAVGDSADPPHYEETSFGDE) are disordered. 2 positions are modified to phosphoserine: Ser57 and Ser87. Thr91, Thr96, Thr101, and Thr114 each carry phosphothreonine. Position 116 is a phosphoserine (Ser116). Ser126 bears the Phosphoserine; by AMPK mark. The residue at position 144 (Ser144) is a Phosphoserine. The helical transmembrane segment at 174-194 (GWVKGVLVRCMLNIWGVMLFI) threads the bilayer. At 195 to 197 (RLS) the chain is on the extracellular side. Residues 198–218 (WIVGEAGIGLGVLIILLSTMV) form a helical membrane-spanning segment. Residues 219–255 (TSITGLSTSAIATNGFVRGGGAYYLISRSLGPEFGGS) are Cytoplasmic-facing. The helical transmembrane segment at 256–276 (IGLIFAFANAVAVAMYVVGFA) threads the bilayer. Topologically, residues 277 to 298 (ETVVDLLKESDSMMVDPTNDIR) are extracellular. Residues 299 to 319 (IIGSITVVILLGISVAGMEWE) form a helical membrane-spanning segment. Topologically, residues 320–323 (AKAQ) are cytoplasmic. A helical membrane pass occupies residues 324–344 (VILLVILLIAIANFFIGTVIP). Over 345–375 (SNNEKKSRGFFNYQASIFAENFGPSFTKGEG) the chain is Extracellular. A helical membrane pass occupies residues 376 to 396 (FFSVFAIFFPAATGILAGANI). At 397 to 413 (SGDLEDPQDAIPRGTML) the chain is on the cytoplasmic side. The helical transmembrane segment at 414 to 434 (AIFITTVAYIGVAICVAACVV) threads the bilayer. Residues 435–546 (RDATGSMNDT…NNEPLRGYFL (112 aa)) lie on the Extracellular side of the membrane. 2 N-linked (GlcNAc...) asparagine glycosylation sites follow: Asn442 and Asn452. A run of 2 helical transmembrane segments spans residues 547–567 (TFVI…APII) and 568–588 (SNFF…ASYA). At 589–605 (KSPGWRPAYGIYNMWVS) the chain is on the extracellular side. Residues 606 to 626 (LFGAILCCAVMFVINWWAAVI) form a helical membrane-spanning segment. At 627 to 1095 (TYVIELFLYI…NHKNVLTFYS (469 aa)) the chain is on the cytoplasmic side.

Belongs to the SLC12A transporter family. When phosphorylated, interacts with PPP3CB. In terms of processing, phosphorylated at Ser-87, Thr-96 and Thr-101 by OXSR1/OSR1 and STK39/SPAK downstream of WNK kinases (WNK1, WNK2, WNK3 or WNK4), promoting its activity. Short-term cyclosporine administration increases SLC12A1 phosphorylation in kidney thick ascending limb, possibly through the inhibition of PPP3CB/calcineurin A beta phosphatase. As to expression, predominantly expressed in kidney (at protein level). Kidney-specific; most highly expressed in the outer stripe of outer medulla (at protein level). In terms of tissue distribution, kidney-specific; most highly expressed in the cortical thick ascending limb (at protein level). As to expression, kidney-specific; most highly expressed in the inner stripe of outer medulla (at protein level).

The protein resides in the apical cell membrane. It catalyses the reaction K(+)(out) + 2 chloride(out) + Na(+)(out) = K(+)(in) + 2 chloride(in) + Na(+)(in). With respect to regulation, activated following phosphorylation by OXSR1/OSR1 and STK39/SPAK downstream of WNK kinases (WNK1, WNK2, WNK3 or WNK4). Its activity is regulated as follows. Inhibited by mercury dichloride and diuretic drug bumetaide. Inactive in isotonic conditions. Functionally, renal sodium, potassium and chloride ion cotransporter that mediates the transepithelial NaCl reabsorption in the thick ascending limb and plays an essential role in the urinary concentration and volume regulation. Electrically silent transporter system. High affinity, high capacity cotransporter for sodium, potassium and chloride ions, with a coupling ratio 1Na(+):1K(+):2Cl(-). In terms of biological role, high affinity, low capacity cotransporter for sodium, potassium and chloride ions, with a coupling ratio 1Na(+):1K(+):2Cl(-). Its function is as follows. Low affinity, low capacity cotransporter for sodium, potassium and chloride ions, with a coupling ratio 1Na(+):1K(+):2Cl(-). The protein is Solute carrier family 12 member 1 (Slc12a1) of Mus musculus (Mouse).